The sequence spans 77 residues: LILVACLMMSCVHCKKDGYPVDWNNCMYDCGYDNAYCEKICKEKGGESGYCYFWKISCYCEGLPDNVEIKGYGRCRG.

An N-terminal signal peptide occupies residues 1 to 7 (LILVACL). The 61-residue stretch at 16–76 (KDGYPVDWNN…VEIKGYGRCR (61 aa)) folds into the LCN-type CS-alpha/beta domain. Disulfide bonds link Cys26-Cys75, Cys30-Cys51, Cys37-Cys58, and Cys41-Cys60.

This sequence belongs to the long (4 C-C) scorpion toxin superfamily. Sodium channel inhibitor family. Alpha subfamily. In terms of tissue distribution, expressed by the venom gland.

The protein resides in the secreted. Binds voltage-independently at site-3 of voltage-gated sodium channels (Nav) and inhibits the inactivation of the activated channels, thereby blocking neuronal transmission. The sequence is that of Neurotoxin LmNaTx21.1 from Lychas mucronatus (Chinese swimming scorpion).